Consider the following 355-residue polypeptide: cAMP-dependent protein kinase catalytic subunit PRKX (355 aa).

Met-1 carries the N-acetylmethionine modification. The interval 1 to 42 (MEPPAGAAATVKDPDHDPVKTKVSAPAADPKPRTSSQKAGHS) is disordered. A Protein kinase domain is found at 46–300 (WDTIATVGTG…AEDIKRHRWF (255 aa)). ATP contacts are provided by residues 52–60 (VGTGTFGRV) and Lys-75. The active-site Proton acceptor is Asp-169. Thr-200 bears the Phosphothreonine mark. The 55-residue stretch at 301 to 355 (RGVEWESVPQRKLKPPIVPKLSGDGDISNFETYPESELDKTPSVSDKDLETFKNF) folds into the AGC-kinase C-terminal domain. The disordered stretch occupies residues 316 to 355 (PIVPKLSGDGDISNFETYPESELDKTPSVSDKDLETFKNF). Over residues 337 to 355 (ELDKTPSVSDKDLETFKNF) the composition is skewed to basic and acidic residues.

The protein belongs to the protein kinase superfamily. AGC Ser/Thr protein kinase family. cAMP subfamily. In terms of assembly, like other cAMP-dependent protein kinases, the inactive holoenzyme is probably composed of 2 PRKX catalytic subunits and a dimer of regulatory subunits. Interacts (cAMP-dependent) specifically with the regulatory subunits PRKAR1A and PRKAR1B. Compared to other cAMP-dependent serine/threonine protein kinases, does not interact with the 2 other PKA regulatory subunits PRKAR2A and PRKAR2B. Interacts with PIN1 (via WW domain). Interacts with cAMP-dependent protein kinase inhibitor/PKI proteins; inhibits PRKX. Interacts with GPKOW. Interacts with SMAD6. Interacts with PKD1; involved in differentiation and controlled morphogenesis of the kidney. In terms of processing, phosphorylated; autophosphorylates in vitro. Widely expressed.

It is found in the cytoplasm. The protein resides in the nucleus. The catalysed reaction is L-seryl-[protein] + ATP = O-phospho-L-seryl-[protein] + ADP + H(+). It carries out the reaction L-threonyl-[protein] + ATP = O-phospho-L-threonyl-[protein] + ADP + H(+). Binding of cAMP to the PRKAR1A or PRKAR1B regulatory subunits induces dissociation of the holoenzyme heterotetramer. The released monomeric PRKX is then active and able to phosphorylate its substrates. Functionally, serine/threonine protein kinase regulated by and mediating cAMP signaling in cells. Acts through phosphorylation of downstream targets that may include CREB, SMAD6 and PKD1 and has multiple functions in cellular differentiation and epithelial morphogenesis. Regulates myeloid cell differentiation through SMAD6 phosphorylation. Involved in nephrogenesis by stimulating renal epithelial cell migration and tubulogenesis. Also involved in angiogenesis through stimulation of endothelial cell proliferation, migration and vascular-like structure formation. The chain is cAMP-dependent protein kinase catalytic subunit PRKX (Prkx) from Mus musculus (Mouse).